A 158-amino-acid polypeptide reads, in one-letter code: Large ribosomal subunit protein uL16 (158 aa).

This sequence belongs to the universal ribosomal protein uL16 family. Part of the 50S ribosomal subunit.

Its function is as follows. Binds 23S rRNA and is also seen to make contacts with the A and possibly P site tRNAs. The chain is Large ribosomal subunit protein uL16 from Prochlorococcus marinus (strain MIT 9303).